The chain runs to 462 residues: Adenylosuccinate lyase (462 aa).

N(6)-(1,2-dicarboxyethyl)-AMP-binding positions include 21–22 (RY), 87–89 (KHD), and 114–115 (TS). H162 serves as the catalytic Proton donor/acceptor. Q236 lines the N(6)-(1,2-dicarboxyethyl)-AMP pocket. S287 acts as the Proton donor/acceptor in catalysis. Residues S288, 293-295 (KRN), and 332-336 (SAERC) contribute to the N(6)-(1,2-dicarboxyethyl)-AMP site.

Belongs to the lyase 1 family. Adenylosuccinate lyase subfamily. Homotetramer. Residues from neighboring subunits contribute catalytic and substrate-binding residues to each active site.

It carries out the reaction N(6)-(1,2-dicarboxyethyl)-AMP = fumarate + AMP. It catalyses the reaction (2S)-2-[5-amino-1-(5-phospho-beta-D-ribosyl)imidazole-4-carboxamido]succinate = 5-amino-1-(5-phospho-beta-D-ribosyl)imidazole-4-carboxamide + fumarate. It participates in purine metabolism; AMP biosynthesis via de novo pathway; AMP from IMP: step 2/2. Its pathway is purine metabolism; IMP biosynthesis via de novo pathway; 5-amino-1-(5-phospho-D-ribosyl)imidazole-4-carboxamide from 5-amino-1-(5-phospho-D-ribosyl)imidazole-4-carboxylate: step 2/2. Its function is as follows. Catalyzes two reactions in de novo purine nucleotide biosynthesis. Catalyzes the breakdown of 5-aminoimidazole- (N-succinylocarboxamide) ribotide (SAICAR or 2-[5-amino-1-(5-phospho-beta-D-ribosyl)imidazole-4-carboxamido]succinate) to 5-aminoimidazole-4-carboxamide ribotide (AICAR or 5-amino-1-(5-phospho-beta-D-ribosyl)imidazole-4-carboxamide) and fumarate, and of adenylosuccinate (ADS or N(6)-(1,2-dicarboxyethyl)-AMP) to adenosine monophosphate (AMP) and fumarate. This Methanocaldococcus jannaschii (strain ATCC 43067 / DSM 2661 / JAL-1 / JCM 10045 / NBRC 100440) (Methanococcus jannaschii) protein is Adenylosuccinate lyase (purB).